A 166-amino-acid polypeptide reads, in one-letter code: Regulator of ribonuclease activity A (166 aa).

This sequence belongs to the RraA family. Homotrimer. Binds to both RNA-binding sites in the C-terminal region of Rne and to RhlB.

Its subcellular location is the cytoplasm. Functionally, globally modulates RNA abundance by binding to RNase E (Rne) and regulating its endonucleolytic activity. Can modulate Rne action in a substrate-dependent manner by altering the composition of the degradosome. Modulates RNA-binding and helicase activities of the degradosome. This Histophilus somni (strain 129Pt) (Haemophilus somnus) protein is Regulator of ribonuclease activity A.